Here is a 156-residue protein sequence, read N- to C-terminus: Rhombotin-1 (156 aa).

2 LIM zinc-binding domains span residues 22–84 (KGCA…LFGT) and 86–148 (GNCA…GQLN).

It localises to the nucleus. Its function is as follows. May be involved in gene regulation within neural lineage cells potentially by direct DNA binding or by binding to other transcription factors. This chain is Rhombotin-1, found in Xenopus laevis (African clawed frog).